The primary structure comprises 65 residues: Small ribosomal subunit protein bS21 (65 aa).

This sequence belongs to the bacterial ribosomal protein bS21 family.

In Chlorobaculum parvum (strain DSM 263 / NCIMB 8327) (Chlorobium vibrioforme subsp. thiosulfatophilum), this protein is Small ribosomal subunit protein bS21.